We begin with the raw amino-acid sequence, 491 residues long: Katanin p60 ATPase-containing subunit A1 (491 aa).

The tract at residues Met1–Tyr29 is interaction with KATNB1. Residues Met1–Ser75 are interaction with dynein and NDEL1. The interaction with microtubules stretch occupies residues Met1–Thr185. Phosphoserine; by DYRK2 occurs at positions 42 and 109. A disordered region spans residues Gln87–Thr185. Thr133 is modified (phosphothreonine; by DYRK2). A compositionally biased stretch (basic and acidic residues) spans His145–Lys169. Ser170 is subject to Phosphoserine. Gly249–Thr256 contributes to the ATP binding site.

This sequence belongs to the AAA ATPase family. Katanin p60 subunit A1 subfamily. In terms of assembly, can homooligomerize into hexameric rings, which may be promoted by interaction with microtubules. Interacts with KATNB1, which may serve as a targeting subunit. Interacts with ASPM; the katanin complex formation KATNA1:KATNB1 is required for the association of ASPM Interacts with dynein and NDEL1. Associates with the E3 ligase complex containing DYRK2, EDD/UBR5, DDB1 and DCAF1 proteins (EDVP complex). Interacts with KLHL42 (via the kelch domains). Interacts with CUL3; the interaction is enhanced by KLHL42. Interacts with KATNB1 and KATNBL1. Interacts with CAMSAP2 and CAMSAP3; leading to regulate the length of CAMSAP-decorated microtubule stretches. Phosphorylation by DYRK2 triggers ubiquitination and subsequent degradation. Post-translationally, ubiquitinated by the BCR(KLHL42) E3 ubiquitin ligase complex, leading to its proteasomal degradation. Ubiquitinated by the EDVP E3 ligase complex and subsequently targeted for proteasomal degradation.

It localises to the cytoplasm. It is found in the midbody. Its subcellular location is the cytoskeleton. The protein resides in the microtubule organizing center. The protein localises to the centrosome. It localises to the spindle pole. It is found in the spindle. The catalysed reaction is n ATP + n H2O + a microtubule = n ADP + n phosphate + (n+1) alpha/beta tubulin heterodimers.. With respect to regulation, ATPase activity is stimulated by microtubules, which promote homooligomerization. ATP-dependent microtubule severing is stimulated by interaction with KATNB1. In terms of biological role, catalytic subunit of a complex which severs microtubules in an ATP-dependent manner. Microtubule severing may promote rapid reorganization of cellular microtubule arrays and the release of microtubules from the centrosome following nucleation. Microtubule release from the mitotic spindle poles may allow depolymerization of the microtubule end proximal to the spindle pole, leading to poleward microtubule flux and poleward motion of chromosome. Microtubule release within the cell body of neurons may be required for their transport into neuronal processes by microtubule-dependent motor proteins. This transport is required for axonal growth. This Macaca fascicularis (Crab-eating macaque) protein is Katanin p60 ATPase-containing subunit A1.